Consider the following 303-residue polypeptide: UDP-3-O-acyl-N-acetylglucosamine deacetylase (303 aa).

Zn(2+) contacts are provided by His-78, His-237, and Asp-241. His-264 (proton donor) is an active-site residue.

Belongs to the LpxC family. Zn(2+) is required as a cofactor.

It carries out the reaction a UDP-3-O-[(3R)-3-hydroxyacyl]-N-acetyl-alpha-D-glucosamine + H2O = a UDP-3-O-[(3R)-3-hydroxyacyl]-alpha-D-glucosamine + acetate. The protein operates within glycolipid biosynthesis; lipid IV(A) biosynthesis; lipid IV(A) from (3R)-3-hydroxytetradecanoyl-[acyl-carrier-protein] and UDP-N-acetyl-alpha-D-glucosamine: step 2/6. In terms of biological role, catalyzes the hydrolysis of UDP-3-O-myristoyl-N-acetylglucosamine to form UDP-3-O-myristoylglucosamine and acetate, the committed step in lipid A biosynthesis. The chain is UDP-3-O-acyl-N-acetylglucosamine deacetylase from Saccharophagus degradans (strain 2-40 / ATCC 43961 / DSM 17024).